We begin with the raw amino-acid sequence, 253 residues long: Imidazole glycerol phosphate synthase subunit HisF (253 aa).

Residues Asp11 and Asp130 contribute to the active site.

This sequence belongs to the HisA/HisF family. Heterodimer of HisH and HisF.

It is found in the cytoplasm. It carries out the reaction 5-[(5-phospho-1-deoxy-D-ribulos-1-ylimino)methylamino]-1-(5-phospho-beta-D-ribosyl)imidazole-4-carboxamide + L-glutamine = D-erythro-1-(imidazol-4-yl)glycerol 3-phosphate + 5-amino-1-(5-phospho-beta-D-ribosyl)imidazole-4-carboxamide + L-glutamate + H(+). The protein operates within amino-acid biosynthesis; L-histidine biosynthesis; L-histidine from 5-phospho-alpha-D-ribose 1-diphosphate: step 5/9. IGPS catalyzes the conversion of PRFAR and glutamine to IGP, AICAR and glutamate. The HisF subunit catalyzes the cyclization activity that produces IGP and AICAR from PRFAR using the ammonia provided by the HisH subunit. This is Imidazole glycerol phosphate synthase subunit HisF from Clostridium botulinum (strain 657 / Type Ba4).